The primary structure comprises 178 residues: Large ribosomal subunit protein uL10 (178 aa).

Belongs to the universal ribosomal protein uL10 family. Part of the ribosomal stalk of the 50S ribosomal subunit. The N-terminus interacts with L11 and the large rRNA to form the base of the stalk. The C-terminus forms an elongated spine to which L12 dimers bind in a sequential fashion forming a multimeric L10(L12)X complex.

Functionally, forms part of the ribosomal stalk, playing a central role in the interaction of the ribosome with GTP-bound translation factors. In Leuconostoc mesenteroides subsp. mesenteroides (strain ATCC 8293 / DSM 20343 / BCRC 11652 / CCM 1803 / JCM 6124 / NCDO 523 / NBRC 100496 / NCIMB 8023 / NCTC 12954 / NRRL B-1118 / 37Y), this protein is Large ribosomal subunit protein uL10.